Consider the following 474-residue polypeptide: Selection and upkeep of intraepithelial T-cells protein 4 (474 aa).

An N-terminal signal peptide occupies residues 1-25 (MGATEVLTSYCVVLCLLQMVALSSG). Residues 26 to 241 (HFTVIGSQRP…VLSGELFSWK (216 aa)) lie on the Extracellular side of the membrane. Residues 27–140 (FTVIGSQRPI…EEHITEVKVT (114 aa)) form the Ig-like V-type domain. 2 cysteine pairs are disulfide-bonded: C48-C122 and C162-C216. N111 and N199 each carry an N-linked (GlcNAc...) asparagine glycan. The region spanning 141–234 (ATSSDIQILM…QEQSINIVLS (94 aa)) is the Ig-like C1-type domain. Residues 242 to 262 (IVWIMILSTISFVMIDFCMTY) form a helical membrane-spanning segment. Topologically, residues 263–298 (CVQQQLIHEESLSTVDNDQCESDQSEGTCYKRNYPW) are cytoplasmic. A helical membrane pass occupies residues 299–319 (IIIAVVPIISVFAIIGVMLFL). Residues 320-341 (HLEQRVTILEQHFELDTLWLED) lie on the Extracellular side of the membrane. Residues 342-362 (ISVILCVVIVSNINLIPLIYF) form a helical membrane-spanning segment. Residues 363-381 (RLHEHVPRFKDRSPILNKA) lie on the Cytoplasmic side of the membrane. The helical transmembrane segment at 382–402 (VVFLHFIYFSIVCGTILLVHL) threads the bilayer. Residues 403–420 (QLRNKVSISDSLFSLYNS) lie on the Extracellular side of the membrane. Residues 421-441 (WLTDISMILGFLLSIFIVTTI) form a helical membrane-spanning segment. The Cytoplasmic segment spans residues 442-474 (AKSSLFNKKWCIGLCIHMKEAEATGGPCEGEEL).

It belongs to the SKINT family. Expressed in skin, thymus and, to a lower extent, bladder and testis.

It localises to the membrane. In terms of biological role, may act by engaging a cell surface molecule on immature T-cells in the embryonic thymus. The polypeptide is Selection and upkeep of intraepithelial T-cells protein 4 (Skint4) (Mus musculus (Mouse)).